The sequence spans 185 residues: Ribosome-recycling factor (185 aa).

The protein belongs to the RRF family.

The protein localises to the cytoplasm. Functionally, responsible for the release of ribosomes from messenger RNA at the termination of protein biosynthesis. May increase the efficiency of translation by recycling ribosomes from one round of translation to another. The protein is Ribosome-recycling factor of Desulfatibacillum aliphaticivorans.